A 254-amino-acid polypeptide reads, in one-letter code: Adenosylcobinamide-GDP ribazoletransferase (254 aa).

The next 7 membrane-spanning stretches (helical) occupy residues 27–47, 50–70, 104–124, 131–151, 170–190, 194–214, and 233–253; these read SSLYWFPVVGLVIGGIVVLLA, GMGVGWPELAAVLALLGGLIL, VGSFGSLALIGVMLFKWICLL, AYGMIAAGAVLSRTAQVLLAA, AGWPHLLVASISGVVLLFVLL, LAPSLILLFGSVVALFFVGWL, and LVEAAVWLLAALWLKGLFWAI.

The protein belongs to the CobS family. Mg(2+) serves as cofactor.

The protein resides in the cell inner membrane. The catalysed reaction is alpha-ribazole + adenosylcob(III)inamide-GDP = adenosylcob(III)alamin + GMP + H(+). The enzyme catalyses alpha-ribazole 5'-phosphate + adenosylcob(III)inamide-GDP = adenosylcob(III)alamin 5'-phosphate + GMP + H(+). It functions in the pathway cofactor biosynthesis; adenosylcobalamin biosynthesis; adenosylcobalamin from cob(II)yrinate a,c-diamide: step 7/7. Its function is as follows. Joins adenosylcobinamide-GDP and alpha-ribazole to generate adenosylcobalamin (Ado-cobalamin). Also synthesizes adenosylcobalamin 5'-phosphate from adenosylcobinamide-GDP and alpha-ribazole 5'-phosphate. The sequence is that of Adenosylcobinamide-GDP ribazoletransferase from Chlorobaculum tepidum (strain ATCC 49652 / DSM 12025 / NBRC 103806 / TLS) (Chlorobium tepidum).